The sequence spans 225 residues: UPF0758 protein BCE33L4198 (225 aa).

The MPN domain occupies 103 to 225 (SIRNPEDCAR…FVSLKEKGHI (123 aa)). Residues histidine 174, histidine 176, and aspartate 187 each contribute to the Zn(2+) site. Residues 174–187 (HNHPSGDPAPSRED) carry the JAMM motif motif.

The protein belongs to the UPF0758 family.

This chain is UPF0758 protein BCE33L4198, found in Bacillus cereus (strain ZK / E33L).